Here is a 502-residue protein sequence, read N- to C-terminus: ATP synthase subunit alpha (502 aa).

Residue Gly169–Thr176 participates in ATP binding.

It belongs to the ATPase alpha/beta chains family. F-type ATPases have 2 components, CF(1) - the catalytic core - and CF(0) - the membrane proton channel. CF(1) has five subunits: alpha(3), beta(3), gamma(1), delta(1), epsilon(1). CF(0) has three main subunits: a(1), b(2) and c(9-12). The alpha and beta chains form an alternating ring which encloses part of the gamma chain. CF(1) is attached to CF(0) by a central stalk formed by the gamma and epsilon chains, while a peripheral stalk is formed by the delta and b chains.

The protein localises to the cell membrane. The enzyme catalyses ATP + H2O + 4 H(+)(in) = ADP + phosphate + 5 H(+)(out). In terms of biological role, produces ATP from ADP in the presence of a proton gradient across the membrane. The alpha chain is a regulatory subunit. The sequence is that of ATP synthase subunit alpha from Bacillus pumilus (strain SAFR-032).